The chain runs to 131 residues: MAPSLWKGLVGIGLFALAHAALSAAQHRSYMRLTEKEDESLPIDIVLQTLLAFAVTCYGIVHIAGEFKDMDATSELKNKTFDTLRNHPSFYVFNHRGRVLFRPSDTANSSNQDALSSNTSLKLRKLESLRR.

At Met1 to Pro3 the chain is on the cytoplasmic side. A helical transmembrane segment spans residues Ser4–Leu22. Residues Ser23–Ile43 are Lumenal-facing. Residues Asp44–Ile63 form a helical membrane-spanning segment. The Cytoplasmic segment spans residues Ala64–Arg131. A Phosphoserine modification is found at Ser120.

The protein belongs to the membrane magnesium transporter (TC 1.A.67) family. As to quaternary structure, component of the ER membrane protein complex (EMC).

The protein localises to the endoplasmic reticulum membrane. Its subcellular location is the golgi apparatus membrane. The protein resides in the early endosome membrane. In terms of biological role, part of the endoplasmic reticulum membrane protein complex (EMC) that enables the energy-independent insertion into endoplasmic reticulum membranes of newly synthesized membrane proteins. Preferentially accommodates proteins with transmembrane domains that are weakly hydrophobic or contain destabilizing features such as charged and aromatic residues. Involved in the cotranslational insertion of multi-pass membrane proteins in which stop-transfer membrane-anchor sequences become ER membrane spanning helices. It is also required for the post-translational insertion of tail-anchored/TA proteins in endoplasmic reticulum membranes. By mediating the proper cotranslational insertion of N-terminal transmembrane domains in an N-exo topology, with translocated N-terminus in the lumen of the ER, controls the topology of multi-pass membrane proteins like the G protein-coupled receptors. By regulating the insertion of various proteins in membranes, it is indirectly involved in many cellular processes. May be involved in Mg(2+) transport. This chain is ER membrane protein complex subunit 5, found in Pongo abelii (Sumatran orangutan).